Consider the following 679-residue polypeptide: DNA ligase (679 aa).

Residues 36–40 and 94–95 each bind NAD(+); these read DEYYD and SL. The active-site N6-AMP-lysine intermediate is the K126. Positions 147, 181, 299, and 323 each coordinate NAD(+). Zn(2+)-binding residues include C415, C418, C433, and C438. One can recognise a BRCT domain in the interval 603-679; the sequence is IQSTKLENKT…DEEFLKKMLE (77 aa).

The protein belongs to the NAD-dependent DNA ligase family. LigA subfamily. Mg(2+) serves as cofactor. Mn(2+) is required as a cofactor.

The enzyme catalyses NAD(+) + (deoxyribonucleotide)n-3'-hydroxyl + 5'-phospho-(deoxyribonucleotide)m = (deoxyribonucleotide)n+m + AMP + beta-nicotinamide D-nucleotide.. Its function is as follows. DNA ligase that catalyzes the formation of phosphodiester linkages between 5'-phosphoryl and 3'-hydroxyl groups in double-stranded DNA using NAD as a coenzyme and as the energy source for the reaction. It is essential for DNA replication and repair of damaged DNA. This is DNA ligase from Mycoplasmopsis pulmonis (strain UAB CTIP) (Mycoplasma pulmonis).